The following is a 241-amino-acid chain: MKFNLALALSLTVATAEAATELCKQWDSIIEGNFIVYNNLWGQGNADDGGHQCTTVKSISGDTVVWSTEWAWSGGPGQVKSYANAALQFTPTTLSSVSSIDSTWKWRDSYTGSDIVANVAYDMFLSSSATGSEEYEIMVWLAALGGAGPISSTGSPIATPTINGVQWDLYLGPNGAMQVYSFVAPSSTENFAGDMKGFIDYLTSEQGLSKDLYLLDVQAGTEPFSGSDAVLTVSEYSVNLA.

The N-terminal stretch at 1-18 (MKFNLALALSLTVATAEA) is a signal peptide.

The protein belongs to the glycosyl hydrolase 12 (cellulase H) family.

The protein resides in the secreted. It catalyses the reaction xyloglucan + H2O = xyloglucan oligosaccharides.. Its function is as follows. Catalyzes endohydrolysis of 1,4-beta-D-glucosidic linkages in xyloglucan with retention of the beta-configuration of the glycosyl residues. Specific for xyloglucan and does not hydrolyze other cell wall components. This Aspergillus clavatus (strain ATCC 1007 / CBS 513.65 / DSM 816 / NCTC 3887 / NRRL 1 / QM 1276 / 107) protein is Probable xyloglucan-specific endo-beta-1,4-glucanase A (xgeA).